A 232-amino-acid chain; its full sequence is 5'-methylthioadenosine/S-adenosylhomocysteine nucleosidase (232 aa).

Glu-12 acts as the Proton acceptor in catalysis. Substrate contacts are provided by residues Gly-78, Ile-152, and 173-174 (ME). The active-site Proton donor is the Asp-197.

It belongs to the PNP/UDP phosphorylase family. MtnN subfamily. Homodimer.

It carries out the reaction S-adenosyl-L-homocysteine + H2O = S-(5-deoxy-D-ribos-5-yl)-L-homocysteine + adenine. The enzyme catalyses S-methyl-5'-thioadenosine + H2O = 5-(methylsulfanyl)-D-ribose + adenine. It catalyses the reaction 5'-deoxyadenosine + H2O = 5-deoxy-D-ribose + adenine. It functions in the pathway amino-acid biosynthesis; L-methionine biosynthesis via salvage pathway; S-methyl-5-thio-alpha-D-ribose 1-phosphate from S-methyl-5'-thioadenosine (hydrolase route): step 1/2. In terms of biological role, catalyzes the irreversible cleavage of the glycosidic bond in both 5'-methylthioadenosine (MTA) and S-adenosylhomocysteine (SAH/AdoHcy) to adenine and the corresponding thioribose, 5'-methylthioribose and S-ribosylhomocysteine, respectively. Also cleaves 5'-deoxyadenosine, a toxic by-product of radical S-adenosylmethionine (SAM) enzymes, into 5-deoxyribose and adenine. Thus, is required for in vivo function of the radical SAM enzymes biotin synthase and lipoic acid synthase, that are inhibited by 5'-deoxyadenosine accumulation. The chain is 5'-methylthioadenosine/S-adenosylhomocysteine nucleosidase from Citrobacter koseri (strain ATCC BAA-895 / CDC 4225-83 / SGSC4696).